We begin with the raw amino-acid sequence, 423 residues long: MSASAVFILDVKGKPLISRNYKGDVAMSKIEHFMPLLVQREEEGALAPLLSHGQVHFLWIKHSNLYLVATTSKNANASLVYSFLYKTIEVFCEYFKELEEESIRDNFVIVYELLDELMDFGFPQTTDSKILQEYITQQSNKLETGKSRVPPTVTNAVSWRSEGIKYKKNEVFIDVIESVNLLVNANGSVLLSEIVGTIKLKVFLSGMPELRLGLNDRVLFELTGRSKNKSVELEDVKFHQCVRLSRFDNDRTISFIPPDGDFELMSYRLSTQVKPLIWIESVIEKFSHSRVEIMVKAKGQFKKQSVANGVEISVPVPSDADSPRFKTSVGSAKYVPERNVVIWSIKSFPGGKEYLMRAHFGLPSVEKEEVEGRPPIGVKFEIPYFTVSGIQVRYMKIIEKSGYQALPWVRYITQSGDYQLRTS.

An MHD domain is found at 168-421 (KNEVFIDVIE…ITQSGDYQLR (254 aa)).

The protein belongs to the adaptor complexes medium subunit family. In terms of assembly, adaptor protein complex 1 (AP-1) is a heterotetramer composed of two large adaptins (gamma-type subunit AP1G1 and beta-type subunit AP1B1), a medium adaptin (mu-type subunit AP1M1 or AP1M2) and a small adaptin (sigma-type subunit AP1S1 or AP1S2 or AP1S3). Interacts with P2X4. Phosphorylation of membrane-bound AP1M1/AP1M2 increases its affinity for sorting signals.

It is found in the golgi apparatus. The protein resides in the cytoplasmic vesicle. It localises to the clathrin-coated vesicle membrane. Its function is as follows. Subunit of clathrin-associated adaptor protein complex 1 that plays a role in protein sorting in the trans-Golgi network (TGN) and endosomes. The AP complexes mediate the recruitment of clathrin to membranes and the recognition of sorting signals within the cytosolic tails of transmembrane cargo molecules. The polypeptide is AP-1 complex subunit mu-2 (AP1M2) (Homo sapiens (Human)).